The chain runs to 901 residues: Envelope glycoprotein B (901 aa).

The N-terminal stretch at 1 to 34 (MRPVRGIARSRILSCSWRGTWTSALTILYLGVYC) is a signal peptide. Topologically, residues 35 to 736 (ESTTVTPTTV…GALVTFVTNP (702 aa)) are virion surface. 3 N-linked (GlcNAc...) asparagine; by host glycosylation sites follow: N53, N60, and N66. Disulfide bonds link C84-C533, C101-C489, C174-C239, and C331-C380. An involved in fusion and/or binding to host membrane region spans residues 141 to 147 (SYKYVTY). N197 carries an N-linked (GlcNAc...) asparagine; by host glycan. Positions 226–233 (GSVWLYKE) are involved in fusion and/or binding to host membrane. N-linked (GlcNAc...) asparagine; by host glycosylation is found at N270, N289, N328, N372, N398, N406, N436, N537, N571, and N623. A disulfide bridge links C559 with C596. Hydrophobic membrane proximal region stretches follow at residues 683-734 (VERV…TFVT) and 714-734 (AVGAVGGAIGSFIGALVTFVT). The helical transmembrane segment at 737-757 (FGAFVVFLFCVGCITLVITVY) threads the bilayer. At 758 to 901 (RRQRRAMQRP…KLNTEDDVHV (144 aa)) the chain is on the intravirion side. Disordered regions lie at residues 794-813 (GPEGTSGDAPPPYPGEAPYG) and 852-901 (DDKK…DVHV). 2 stretches are compositionally biased toward basic and acidic residues: residues 852 to 864 (DDKKRQEIEKSSK) and 872 to 883 (SETRRRPGIMDR). The Internalization motif signature appears at 890-893 (YQKL).

This sequence belongs to the herpesviridae glycoprotein B family. As to quaternary structure, homotrimer; disulfide-linked. Binds to heparan sulfate proteoglycans. Interacts with gH/gL heterodimer. In terms of processing, a proteolytic cleavage by host furin generates two subunits that remain linked by disulfide bonds.

The protein localises to the virion membrane. It localises to the host cell membrane. Its subcellular location is the host endosome membrane. The protein resides in the host Golgi apparatus membrane. Functionally, envelope glycoprotein that forms spikes at the surface of virion envelope. Essential for the initial attachment to heparan sulfate moieties of the host cell surface proteoglycans. Involved in fusion of viral and cellular membranes leading to virus entry into the host cell. Following initial binding to its host receptors, membrane fusion is mediated by the fusion machinery composed at least of gB and the heterodimer gH/gL. May be involved in the fusion between the virion envelope and the outer nuclear membrane during virion egress. In Guinea pig cytomegalovirus (strain 22122) (GPCMV), this protein is Envelope glycoprotein B.